A 78-amino-acid chain; its full sequence is MNVSHNSSIDHNDLAKRGESLIRKSTNRYLTTVRIAFRAKQRRFDDFDGLLEESSIKPVQRSIIELSDEQDQPDLLPG.

The protein belongs to the RNA polymerase subunit omega family. In terms of assembly, in cyanobacteria the RNAP catalytic core is composed of 2 alpha, 1 beta, 1 beta', 1 gamma and 1 omega subunit. When a sigma factor is associated with the core the holoenzyme is formed, which can initiate transcription.

It carries out the reaction RNA(n) + a ribonucleoside 5'-triphosphate = RNA(n+1) + diphosphate. Its function is as follows. Promotes RNA polymerase assembly. Latches the N- and C-terminal regions of the beta' subunit thereby facilitating its interaction with the beta and alpha subunits. The polypeptide is DNA-directed RNA polymerase subunit omega (Prochlorococcus marinus (strain MIT 9515)).